A 273-amino-acid chain; its full sequence is MSSPRHVFYISDRTGLTAENIGEALLNQFGNLSFKRHTHPFVDTPEKARAVVEKVNRSRQENGQRPIAFVSVVDDEIRRIIKGADAFQINFFETFLGLLEKELNTEATASEQGHHSIGNTKRYDARMEAVNFSLNHDDGVSDKNLQEADVILMGVSRSGKTPTCLYLALQYGIRAANYPLIPDDLESADLPRMVKPYRDKLFGLTIQPERLQAIRQERRPNSTYAKIDTCRSEVADAQSMFRRHGIPFANTTDKSVEELAVHILQACKLKRRF.

154-161 is a binding site for ADP; that stretch reads GVSRSGKT.

It belongs to the pyruvate, phosphate/water dikinase regulatory protein family. PSRP subfamily.

It carries out the reaction [pyruvate, water dikinase] + ADP = [pyruvate, water dikinase]-phosphate + AMP + H(+). The enzyme catalyses [pyruvate, water dikinase]-phosphate + phosphate + H(+) = [pyruvate, water dikinase] + diphosphate. Its function is as follows. Bifunctional serine/threonine kinase and phosphorylase involved in the regulation of the phosphoenolpyruvate synthase (PEPS) by catalyzing its phosphorylation/dephosphorylation. This chain is Putative phosphoenolpyruvate synthase regulatory protein, found in Neisseria meningitidis serogroup C (strain 053442).